A 149-amino-acid chain; its full sequence is Large ribosomal subunit protein uL15 (149 aa).

The disordered stretch occupies residues 1–52 (MSELLKLHHLRPAPGSNKAKIRKGRGEASKGKTAGRGTKGTKARSTVPAGFE).

The protein belongs to the universal ribosomal protein uL15 family. In terms of assembly, part of the 50S ribosomal subunit.

Its function is as follows. Binds to the 23S rRNA. This chain is Large ribosomal subunit protein uL15, found in Thermobifida fusca (strain YX).